The following is a 292-amino-acid chain: Ribosomal protein L11 methyltransferase (292 aa).

Residues threonine 144, glycine 165, aspartate 187, and asparagine 229 each contribute to the S-adenosyl-L-methionine site.

This sequence belongs to the methyltransferase superfamily. PrmA family.

It localises to the cytoplasm. It catalyses the reaction L-lysyl-[protein] + 3 S-adenosyl-L-methionine = N(6),N(6),N(6)-trimethyl-L-lysyl-[protein] + 3 S-adenosyl-L-homocysteine + 3 H(+). In terms of biological role, methylates ribosomal protein L11. The sequence is that of Ribosomal protein L11 methyltransferase from Pseudomonas putida (strain ATCC 47054 / DSM 6125 / CFBP 8728 / NCIMB 11950 / KT2440).